The primary structure comprises 92 residues: Large ribosomal subunit protein eL43 (92 aa).

Zn(2+) contacts are provided by Cys-39, Cys-42, Cys-57, and Cys-60. The segment at 39-60 (CPNCGEDRVDRQGTGIWQCSYC) adopts a C4-type zinc-finger fold.

The protein belongs to the eukaryotic ribosomal protein eL43 family. Putative zinc-binding subfamily. In terms of assembly, part of the 50S ribosomal subunit. Contacts protein L2. Requires Zn(2+) as cofactor.

Functionally, binds to the 23S rRNA. The protein is Large ribosomal subunit protein eL43 of Haloarcula marismortui (strain ATCC 43049 / DSM 3752 / JCM 8966 / VKM B-1809) (Halobacterium marismortui).